The sequence spans 505 residues: 4-alpha-glucanotransferase (505 aa).

Belongs to the disproportionating enzyme family.

It localises to the cytoplasm. It catalyses the reaction Transfers a segment of a (1-&gt;4)-alpha-D-glucan to a new position in an acceptor, which may be glucose or a (1-&gt;4)-alpha-D-glucan.. In Streptococcus pneumoniae serotype 4 (strain ATCC BAA-334 / TIGR4), this protein is 4-alpha-glucanotransferase (malQ).